The following is a 249-amino-acid chain: MRILISNDDGVTAPGIAALHAALADYAECAVIAPDQDKSGASSSLTLDRPLHPQTLANGFISLNGTPTDCVHLGLNGLLPQMPDMVVSGINLGANLGDDVLYSGTVAAALEGRFLGGTSLAFSLLSRQPDNLPTAAYIARRLVEAQSRLVLPPRTVLNVNIPNLPLEHIRGIQLTRLGHRARAAAPTKVVNPRGKEGYWIAVAGDAEDGGPGTDFHAVMQGYVSITPLQLDRTFNDAFEQLDGWLEGLL.

Residues Asp-8, Asp-9, Ser-39, and Asn-91 each contribute to the a divalent metal cation site.

This sequence belongs to the SurE nucleotidase family. Requires a divalent metal cation as cofactor.

It is found in the cytoplasm. The enzyme catalyses a ribonucleoside 5'-phosphate + H2O = a ribonucleoside + phosphate. Nucleotidase that shows phosphatase activity on nucleoside 5'-monophosphates. The chain is 5'-nucleotidase SurE from Pseudomonas putida (strain ATCC 47054 / DSM 6125 / CFBP 8728 / NCIMB 11950 / KT2440).